Consider the following 282-residue polypeptide: HTH-type transcriptional activator RhaR (282 aa).

The region spanning 179-277 (DKLITRLAAS…GMTPSQWRHL (99 aa)) is the HTH araC/xylS-type domain. 2 DNA-binding regions (H-T-H motif) span residues 196-217 (DKFC…RQQT) and 244-267 (ISDI…TRET).

In terms of assembly, binds DNA as a dimer.

It localises to the cytoplasm. Activates expression of the rhaSR operon in response to L-rhamnose. The polypeptide is HTH-type transcriptional activator RhaR (Escherichia coli (strain K12 / MC4100 / BW2952)).